A 214-amino-acid chain; its full sequence is NADH-quinone oxidoreductase subunit C (214 aa).

Belongs to the complex I 30 kDa subunit family. In terms of assembly, NDH-1 is composed of 14 different subunits. Subunits NuoB, C, D, E, F, and G constitute the peripheral sector of the complex.

The protein resides in the cell inner membrane. The enzyme catalyses a quinone + NADH + 5 H(+)(in) = a quinol + NAD(+) + 4 H(+)(out). Its function is as follows. NDH-1 shuttles electrons from NADH, via FMN and iron-sulfur (Fe-S) centers, to quinones in the respiratory chain. The immediate electron acceptor for the enzyme in this species is believed to be ubiquinone. Couples the redox reaction to proton translocation (for every two electrons transferred, four hydrogen ions are translocated across the cytoplasmic membrane), and thus conserves the redox energy in a proton gradient. This is NADH-quinone oxidoreductase subunit C from Francisella tularensis subsp. holarctica (strain LVS).